Here is a 130-residue protein sequence, read N- to C-terminus: Fumarate reductase subunit C (130 aa).

Transmembrane regions (helical) follow at residues 30–50 (EGTS…VFAL), 60–80 (FVSF…LFAA), and 110–130 (IKAL…VALL).

The protein belongs to the FrdC family. In terms of assembly, part of an enzyme complex containing four subunits: a flavoprotein (FrdA), an iron-sulfur protein (FrdB), and two hydrophobic anchor proteins (FrdC and FrdD).

The protein resides in the cell inner membrane. In terms of biological role, two distinct, membrane-bound, FAD-containing enzymes are responsible for the catalysis of fumarate and succinate interconversion; fumarate reductase is used in anaerobic growth, and succinate dehydrogenase is used in aerobic growth. Anchors the catalytic components of the fumarate reductase complex to the cell inner membrane, binds quinones. The sequence is that of Fumarate reductase subunit C from Yersinia pseudotuberculosis serotype O:1b (strain IP 31758).